Consider the following 167-residue polypeptide: Periplasmic nitrate reductase, electron transfer subunit (167 aa).

The N-terminal stretch at 1-34 (MRRAHRAGERVMMKRFGIALLAVAIAAGASSLTA) is a signal peptide. The tract at residues 40-65 (GLHGPAPLNDEGPAPPMLPNRNTSER) is disordered. Heme c is bound by residues His79, Cys93, Cys96, His97, His114, Cys133, Cys136, and His137.

Belongs to the NapB family. As to quaternary structure, component of the periplasmic nitrate reductase NapAB complex composed of NapA and NapB. Post-translationally, binds 2 heme C groups per subunit.

Its subcellular location is the periplasm. Electron transfer subunit of the periplasmic nitrate reductase complex NapAB. Receives electrons from the membrane-anchored tetraheme c-type NapC protein and transfers these to NapA subunit, thus allowing electron flow between membrane and periplasm. Essential for periplasmic nitrate reduction with nitrate as the terminal electron acceptor. The chain is Periplasmic nitrate reductase, electron transfer subunit from Bradyrhizobium japonicum.